Here is a 1383-residue protein sequence, read N- to C-terminus: WD repeat-containing protein dyf-2 (1383 aa).

WD repeat units lie at residues E32 to L71, N72 to V112, S118 to V157, K160 to T198, and E337 to S376. TPR repeat units lie at residues E756 to L789, P810 to N847, R885 to A918, P940 to V973, I996 to F1029, L1031 to Q1053, and V1064 to V1097.

As to quaternary structure, component of the IFT complex A (IFT-A) composed of at least che-11, daf-10, dyf-2, ift-139, ift-43 and ifta-1. As to expression, expressed in ciliated sensory neurons.

The protein resides in the cell projection. It is found in the cilium. Its function is as follows. Component of the IFT complex A (IFT-A), a complex required for retrograde ciliary transport. Moves along the ciliary axoneme and is involved in the assembly, localization and the movement of other intraflagellar transport (IFT) proteins along the cilia axoneme. May also associate with the BBSome complex in order to mediate ciliary transport. Regulates cilia biogenesis, morphology and sensitivity to environmental cues. The protein is WD repeat-containing protein dyf-2 of Caenorhabditis elegans.